A 529-amino-acid chain; its full sequence is Bifunctional purine biosynthesis protein PurH (529 aa).

The 148-residue stretch at 2–149 (TDLVPLRRAL…KNHSFVTVLT (148 aa)) folds into the MGS-like domain.

This sequence belongs to the PurH family.

The catalysed reaction is (6R)-10-formyltetrahydrofolate + 5-amino-1-(5-phospho-beta-D-ribosyl)imidazole-4-carboxamide = 5-formamido-1-(5-phospho-D-ribosyl)imidazole-4-carboxamide + (6S)-5,6,7,8-tetrahydrofolate. It carries out the reaction IMP + H2O = 5-formamido-1-(5-phospho-D-ribosyl)imidazole-4-carboxamide. Its pathway is purine metabolism; IMP biosynthesis via de novo pathway; 5-formamido-1-(5-phospho-D-ribosyl)imidazole-4-carboxamide from 5-amino-1-(5-phospho-D-ribosyl)imidazole-4-carboxamide (10-formyl THF route): step 1/1. It participates in purine metabolism; IMP biosynthesis via de novo pathway; IMP from 5-formamido-1-(5-phospho-D-ribosyl)imidazole-4-carboxamide: step 1/1. In Dinoroseobacter shibae (strain DSM 16493 / NCIMB 14021 / DFL 12), this protein is Bifunctional purine biosynthesis protein PurH.